Here is a 290-residue protein sequence, read N- to C-terminus: Nucleotide-binding protein FN1089 (290 aa).

Position 11–18 (11–18 (GLSGAGKT)) interacts with ATP. 56–59 (DIRT) is a binding site for GTP.

It belongs to the RapZ-like family.

Displays ATPase and GTPase activities. The protein is Nucleotide-binding protein FN1089 of Fusobacterium nucleatum subsp. nucleatum (strain ATCC 25586 / DSM 15643 / BCRC 10681 / CIP 101130 / JCM 8532 / KCTC 2640 / LMG 13131 / VPI 4355).